Consider the following 227-residue polypeptide: Thymidylate kinase (227 aa).

An ATP-binding site is contributed by 16–23; the sequence is GIDGAGKT.

Belongs to the thymidylate kinase family.

It carries out the reaction dTMP + ATP = dTDP + ADP. In terms of biological role, phosphorylation of dTMP to form dTDP in both de novo and salvage pathways of dTTP synthesis. This chain is Thymidylate kinase, found in Xanthomonas campestris pv. campestris (strain 8004).